The primary structure comprises 147 residues: Protein SPMIP3 (147 aa).

This Homo sapiens (Human) protein is Protein SPMIP3.